The sequence spans 555 residues: Glutamine--tRNA ligase (555 aa).

The short motif at 34-44 (PEPNGYLHIGH) is the 'HIGH' region element. ATP is bound by residues 35 to 37 (EPN) and 41 to 47 (HIGHAKS). Residues D67 and Y212 each coordinate L-glutamine. ATP is bound by residues T231, 261–262 (RL), and 269–271 (MSK). The 'KMSKS' region motif lies at 268–272 (VMSKR). The segment at 317–324 (TKQDNTIE) is interaction with tRNA.

Belongs to the class-I aminoacyl-tRNA synthetase family. As to quaternary structure, monomer.

The protein localises to the cytoplasm. The enzyme catalyses tRNA(Gln) + L-glutamine + ATP = L-glutaminyl-tRNA(Gln) + AMP + diphosphate. In Salmonella choleraesuis (strain SC-B67), this protein is Glutamine--tRNA ligase.